A 364-amino-acid chain; its full sequence is UDP-N-acetylglucosamine--N-acetylmuramyl-(pentapeptide) pyrophosphoryl-undecaprenol N-acetylglucosamine transferase (364 aa).

Residues 10–12, N124, R166, S196, I252, and Q297 contribute to the UDP-N-acetyl-alpha-D-glucosamine site; that span reads TGG.

The protein belongs to the glycosyltransferase 28 family. MurG subfamily.

It is found in the cell membrane. It carries out the reaction di-trans,octa-cis-undecaprenyl diphospho-N-acetyl-alpha-D-muramoyl-L-alanyl-D-glutamyl-meso-2,6-diaminopimeloyl-D-alanyl-D-alanine + UDP-N-acetyl-alpha-D-glucosamine = di-trans,octa-cis-undecaprenyl diphospho-[N-acetyl-alpha-D-glucosaminyl-(1-&gt;4)]-N-acetyl-alpha-D-muramoyl-L-alanyl-D-glutamyl-meso-2,6-diaminopimeloyl-D-alanyl-D-alanine + UDP + H(+). It functions in the pathway cell wall biogenesis; peptidoglycan biosynthesis. Functionally, cell wall formation. Catalyzes the transfer of a GlcNAc subunit on undecaprenyl-pyrophosphoryl-MurNAc-pentapeptide (lipid intermediate I) to form undecaprenyl-pyrophosphoryl-MurNAc-(pentapeptide)GlcNAc (lipid intermediate II). This is UDP-N-acetylglucosamine--N-acetylmuramyl-(pentapeptide) pyrophosphoryl-undecaprenol N-acetylglucosamine transferase from Ruminiclostridium cellulolyticum (strain ATCC 35319 / DSM 5812 / JCM 6584 / H10) (Clostridium cellulolyticum).